A 314-amino-acid polypeptide reads, in one-letter code: DNA-directed RNA polymerase subunit alpha (314 aa).

Positions 1-228 are alpha N-terminal domain (alpha-NTD); sequence MIEIEKPKIE…EHLNIFVGLT (228 aa). The tract at residues 245–314 is alpha C-terminal domain (alpha-CTD); that stretch reads KEKVLEMTIE…ELGLGLRKDD (70 aa).

Belongs to the RNA polymerase alpha chain family. Homodimer. The RNAP catalytic core consists of 2 alpha, 1 beta, 1 beta' and 1 omega subunit. When a sigma factor is associated with the core the holoenzyme is formed, which can initiate transcription.

It catalyses the reaction RNA(n) + a ribonucleoside 5'-triphosphate = RNA(n+1) + diphosphate. DNA-dependent RNA polymerase catalyzes the transcription of DNA into RNA using the four ribonucleoside triphosphates as substrates. This Bacillus thuringiensis (strain Al Hakam) protein is DNA-directed RNA polymerase subunit alpha.